Here is a 657-residue protein sequence, read N- to C-terminus: Splicing factor Cactin (657 aa).

A compositionally biased stretch (basic residues) spans 1–15 (MGKDSKKHKKERRRE). Disordered regions lie at residues 1 to 83 (MGKD…EDTL), 369 to 406 (QESEELLPVAEVPPQVKIQKEEEEEEEEDEDDEKISKK), and 472 to 503 (ADVDNLTERRNRNRGTLPSSSAASSGAPQGAS). Coiled coils occupy residues 23 to 77 (SDEE…RKDA) and 352 to 403 (RLQL…DEKI). Basic and acidic residues predominate over residues 26-60 (ERLQKRLAEQRSLKKDEKRRQKEEMKKNESAEEKR). The segment covering 61-72 (ARRMEKKMRKDA) has biased composition (basic residues). Acidic residues predominate over residues 389 to 401 (EEEEEEEEDEDDE). Positions 489 to 503 (PSSSAASSGAPQGAS) are enriched in low complexity.

Belongs to the CACTIN family. Expressed in pharynx, intestine, vulva and spermatheca (at protein level).

The protein localises to the nucleus. The protein resides in the cytoplasm. In terms of biological role, plays a role in pre-mRNA splicing by facilitating excision of a subset of introns. Plays a role during early embryonic development. Required for the distal tip cell migration at the end of larval development and for gonad morphogenesis. This Caenorhabditis elegans protein is Splicing factor Cactin (cacn-1).